Here is a 184-residue protein sequence, read N- to C-terminus: ATP synthase subunit b (184 aa).

The helical transmembrane segment at 16–36 (LIPPIPELVIGLIAFVIVFGF) threads the bilayer.

It belongs to the ATPase B chain family. As to quaternary structure, F-type ATPases have 2 components, F(1) - the catalytic core - and F(0) - the membrane proton channel. F(1) has five subunits: alpha(3), beta(3), gamma(1), delta(1), epsilon(1). F(0) has three main subunits: a(1), b(2) and c(10-14). The alpha and beta chains form an alternating ring which encloses part of the gamma chain. F(1) is attached to F(0) by a central stalk formed by the gamma and epsilon chains, while a peripheral stalk is formed by the delta and b chains.

Its subcellular location is the cell membrane. In terms of biological role, f(1)F(0) ATP synthase produces ATP from ADP in the presence of a proton or sodium gradient. F-type ATPases consist of two structural domains, F(1) containing the extramembraneous catalytic core and F(0) containing the membrane proton channel, linked together by a central stalk and a peripheral stalk. During catalysis, ATP synthesis in the catalytic domain of F(1) is coupled via a rotary mechanism of the central stalk subunits to proton translocation. Component of the F(0) channel, it forms part of the peripheral stalk, linking F(1) to F(0). This chain is ATP synthase subunit b, found in Streptomyces coelicolor (strain ATCC BAA-471 / A3(2) / M145).